Consider the following 937-residue polypeptide: Hyphally-regulated protein (937 aa).

The signal sequence occupies residues 1-20; that stretch reads MKVVSNFIFTILLTLNLSAA. N-linked (GlcNAc...) asparagine glycosylation is present at asparagine 16. A helical membrane pass occupies residues 42–62; it reads VHSGATWAILGTTLCSFFGGL. The N-linked (GlcNAc...) asparagine glycan is linked to asparagine 236. Positions 332-483 are disordered; the sequence is SAPESESDLN…QSITSSPGQS (152 aa). Over residues 344–392 the composition is skewed to low complexity; the sequence is TTSSIETSSYSSAATESSVVSESSSAVDSLTSSSLSSKSESSDVVSSTT. The segment covering 393–414 has biased composition (polar residues); sequence NIESSSTAIETTMNSESSTDAG. The segment covering 415-475 has biased composition (low complexity); it reads SSSISQSESS…SNALSSTEQS (61 aa). N-linked (GlcNAc...) asparagine glycosylation is found at asparagine 449, asparagine 488, asparagine 580, asparagine 585, asparagine 595, and asparagine 603. Positions 567 to 590 are enriched in low complexity; the sequence is DATTTTTTSTGGDNSTGGNESGSN. A disordered region spans residues 567-857; it reads DATTTTTTST…VANPVTTSTE (291 aa). Over residues 591–609 the composition is skewed to gly residues; the sequence is HGPGNGSTEGSGNGSGAGS. Copy 1 of the repeat occupies 610 to 613; the sequence is NEGS. Residues 610-753 are 7 X 4 AA repeats of N-E-G-S; it reads NEGSQSGPNN…GAGNGSNEGS (144 aa). N-linked (GlcNAc...) asparagine glycosylation is found at asparagine 619, asparagine 631, asparagine 641, and asparagine 649. Composition is skewed to gly residues over residues 619-631 and 641-665; these read NGSG…GSNN and NGSG…GSGS. 4 repeat units span residues 666-669, 680-683, 690-693, and 698-701. Low complexity predominate over residues 666–682; that stretch reads NEGSQSGSGSQPGPNEG. Positions 699 to 725 are enriched in gly residues; the sequence is EGSGSGSGSGSNNGSGSGSQSGSGSGS. A glycan (N-linked (GlcNAc...) asparagine) is linked at asparagine 711. Residues 726 to 742 are compositionally biased toward low complexity; the sequence is QSGSESGSNSGSNEGSN. Repeat 6 spans residues 738–741; the sequence is NEGS. Positions 743-801 are enriched in gly residues; sequence PGAGNGSNEGSGQGSGNGSEAGSGQGSGPNNGSGSGHNDGSGSGSNQGSNPGAGSGSGS. Asparagine 747 is a glycosylation site (N-linked (GlcNAc...) asparagine). Repeat 7 spans residues 750-753; sequence NEGS. N-linked (GlcNAc...) asparagine glycosylation is found at asparagine 759 and asparagine 773. Residues 802–814 show a composition bias toward low complexity; sequence ESGSKAGSHSGSN. Positions 817 to 829 are enriched in basic and acidic residues; sequence AKTDSIEGFHTES. The span at 841-851 shows a compositional bias: polar residues; it reads ATVTGNSVANP. Residues asparagine 897 and asparagine 913 are each glycosylated (N-linked (GlcNAc...) asparagine). Asparagine 913 carries the GPI-anchor amidated asparagine lipid modification. A propeptide spans 914 to 937 (removed in mature form); it reads GSSIVTGGKSILFGLIVSMVVLFM.

It localises to the cell membrane. The protein localises to the secreted. It is found in the cell wall. Nonessential component of the hyphal cell wall. This chain is Hyphally-regulated protein (HYR1), found in Candida albicans (Yeast).